Consider the following 441-residue polypeptide: Xaa-Pro aminopeptidase (441 aa).

Mn(2+) is bound by residues Asp-261, Asp-272, His-355, Glu-384, and Glu-407.

Belongs to the peptidase M24B family. In terms of assembly, homotetramer. Mn(2+) is required as a cofactor.

It localises to the cytoplasm. The enzyme catalyses Release of any N-terminal amino acid, including proline, that is linked to proline, even from a dipeptide or tripeptide.. This is Xaa-Pro aminopeptidase (pepP) from Escherichia coli (strain K12).